A 226-amino-acid polypeptide reads, in one-letter code: RLA class II histocompatibility antigen, DP alpha-1 chain (226 aa).

Residues 1–189 (EHVSVFVIFA…PIQMPETTET (189 aa)) are Extracellular-facing. 2 N-linked (GlcNAc...) asparagine glycosylation sites follow: Asn-75 and Asn-115. Residues 84–176 (PEVIVFPKEP…LDAPLLTHWE (93 aa)) enclose the Ig-like C1-type domain. Cys-104 and Cys-160 are joined by a disulfide. Residues 190–210 (VVCALGLVVGLAGVVVGIVLI) form a helical membrane-spanning segment. The Cytoplasmic segment spans residues 211–226 (TKALRSSPDPRARRPL).

This sequence belongs to the MHC class II family.

It is found in the membrane. In Oryctolagus cuniculus (Rabbit), this protein is RLA class II histocompatibility antigen, DP alpha-1 chain.